The primary structure comprises 158 residues: Phosphopantetheine adenylyltransferase (158 aa).

Ser-9 is a binding site for substrate. Residues 9–10 and His-17 each bind ATP; that span reads SF. Substrate contacts are provided by Lys-41, Val-73, and Lys-87. ATP is bound by residues 88–90, Glu-98, and 122–128; these read GLR and YSFVSSS.

The protein belongs to the bacterial CoaD family. Homohexamer. Requires Mg(2+) as cofactor.

It is found in the cytoplasm. The enzyme catalyses (R)-4'-phosphopantetheine + ATP + H(+) = 3'-dephospho-CoA + diphosphate. The protein operates within cofactor biosynthesis; coenzyme A biosynthesis; CoA from (R)-pantothenate: step 4/5. In terms of biological role, reversibly transfers an adenylyl group from ATP to 4'-phosphopantetheine, yielding dephospho-CoA (dPCoA) and pyrophosphate. This chain is Phosphopantetheine adenylyltransferase, found in Mycolicibacterium smegmatis (strain ATCC 700084 / mc(2)155) (Mycobacterium smegmatis).